The sequence spans 286 residues: Nucleoid occlusion protein (286 aa).

Positions E147–L166 form a DNA-binding region, H-T-H motif.

Belongs to the ParB family.

The protein localises to the cytoplasm. Its subcellular location is the nucleoid. Effects nucleoid occlusion by binding relatively nonspecifically to DNA and preventing the assembly of the division machinery in the vicinity of the nucleoid, especially under conditions that disturb the cell cycle. It helps to coordinate cell division and chromosome segregation by preventing the formation of the Z ring through the nucleoid, which would cause chromosome breakage. This chain is Nucleoid occlusion protein, found in Oceanobacillus iheyensis (strain DSM 14371 / CIP 107618 / JCM 11309 / KCTC 3954 / HTE831).